The primary structure comprises 212 residues: ER lumen protein-retaining receptor 1-B (212 aa).

Residues 1–4 are Lumenal-facing; the sequence is MNIF. Residues 5–24 form a helical membrane-spanning segment; it reads RFLGDISHLSAIIILLLKIW. Over 25–32 the chain is Cytoplasmic; that stretch reads KSRSCAGI. Residues 33 to 52 form a helical membrane-spanning segment; that stretch reads SGKSQLLFAIVFTTRYLDLF. Positions 47-48 are interaction with the K-D-E-L motif on target proteins; sequence RY. Over 53–58 the chain is Lumenal; the sequence is TNFISF. Residues 59–79 form a helical membrane-spanning segment; sequence YNTSMKVVYVASSYATVWMIY. The Cytoplasmic segment spans residues 80-92; that stretch reads SKFKATYDGNHDT. Residues 93-110 form a helical membrane-spanning segment; it reads FRVEFLIVPTAILSFLVN. Residues 111–116 are Lumenal-facing; that stretch reads HDFTPL. The helical transmembrane segment at 117–135 threads the bilayer; sequence EILWTFSIYLESVAILPQL. At 136 to 149 the chain is on the cytoplasmic side; sequence FMVSKTGEAETITS. Residues 150-168 traverse the membrane as a helical segment; sequence HYLFALGIYRTLYLFNWIW. An interaction with the K-D-E-L motif on target proteins region spans residues 159–169; sequence RTLYLFNWIWR. At 169 to 178 the chain is on the lumenal side; that stretch reads RYQFEEFFDL. Residues 179 to 199 traverse the membrane as a helical segment; it reads IAIVAGLVQTVLYCDFFYLYI. Residues 200–212 lie on the Cytoplasmic side of the membrane; the sequence is TKVLKGKKLSLPA. The tract at residues 204–207 is important for recycling of cargo proteins with the sequence motif K-D-E-L from the Golgi to the endoplasmic reticulum; the sequence is KGKK.

Belongs to the ERD2 family.

The protein resides in the golgi apparatus membrane. The protein localises to the cytoplasmic vesicle. It is found in the COPI-coated vesicle membrane. Its subcellular location is the endoplasmic reticulum membrane. It localises to the endoplasmic reticulum-Golgi intermediate compartment membrane. Receptor for the C-terminal sequence motif K-D-E-L that is present on endoplasmic reticulum resident proteins and that mediates their recycling from the Golgi back to the endoplasmic reticulum. This Xenopus laevis (African clawed frog) protein is ER lumen protein-retaining receptor 1-B (kdelr1-b).